The following is a 365-amino-acid chain: Peridinin-chlorophyll a-binding protein, chloroplastic (365 aa).

A chloroplast-targeting transit peptide spans 1-52 (MVRGARKAIAVGVAVAVACGLQKHLNFVPGPRHAAPVAAAAASMMMAPAAFA). Tandem repeats lie at residues 53 to 215 (DEIG…VPSG) and 216 to 365 (DKIG…ASQR).

As to quaternary structure, monomer.

It is found in the plastid. The protein localises to the chloroplast. Functionally, water-soluble antenna for capture of solar energy in the blue-green range. Peridinin is an asymmetric carotenoid. The sequence is that of Peridinin-chlorophyll a-binding protein, chloroplastic from Symbiodinium sp. (Dinoflagellate).